We begin with the raw amino-acid sequence, 271 residues long: Formamidopyrimidine-DNA glycosylase (271 aa).

The active-site Schiff-base intermediate with DNA is Pro2. Glu3 acts as the Proton donor in catalysis. Lys57 serves as the catalytic Proton donor; for beta-elimination activity. His90, Arg109, and Lys151 together coordinate DNA. The FPG-type zinc finger occupies 236–270 (HVYGRGGETCTSCGNLLSEIRLGQRTTVFCGICQT). Catalysis depends on Arg260, which acts as the Proton donor; for delta-elimination activity.

The protein belongs to the FPG family. In terms of assembly, monomer. It depends on Zn(2+) as a cofactor.

The catalysed reaction is Hydrolysis of DNA containing ring-opened 7-methylguanine residues, releasing 2,6-diamino-4-hydroxy-5-(N-methyl)formamidopyrimidine.. It carries out the reaction 2'-deoxyribonucleotide-(2'-deoxyribose 5'-phosphate)-2'-deoxyribonucleotide-DNA = a 3'-end 2'-deoxyribonucleotide-(2,3-dehydro-2,3-deoxyribose 5'-phosphate)-DNA + a 5'-end 5'-phospho-2'-deoxyribonucleoside-DNA + H(+). Its function is as follows. Involved in base excision repair of DNA damaged by oxidation or by mutagenic agents. Acts as a DNA glycosylase that recognizes and removes damaged bases. Has a preference for oxidized purines, such as 7,8-dihydro-8-oxoguanine (8-oxoG). Has AP (apurinic/apyrimidinic) lyase activity and introduces nicks in the DNA strand. Cleaves the DNA backbone by beta-delta elimination to generate a single-strand break at the site of the removed base with both 3'- and 5'-phosphates. The polypeptide is Formamidopyrimidine-DNA glycosylase (Shewanella baltica (strain OS155 / ATCC BAA-1091)).